The sequence spans 282 residues: Protoheme IX farnesyltransferase (282 aa).

8 helical membrane-spanning segments follow: residues 40 to 60, 87 to 107, 108 to 128, 135 to 157, 162 to 184, 204 to 224, 228 to 248, and 261 to 281; these read LVLA…FNMV, AVLA…AVNP, YVFV…TVLL, SVVF…ATGG, GVLL…STYY, AGVV…FLAF, LISA…VAVL, and AYRA…LLVL.

This sequence belongs to the UbiA prenyltransferase family. Protoheme IX farnesyltransferase subfamily.

It localises to the cell membrane. The catalysed reaction is heme b + (2E,6E)-farnesyl diphosphate + H2O = Fe(II)-heme o + diphosphate. It functions in the pathway porphyrin-containing compound metabolism; heme O biosynthesis; heme O from protoheme: step 1/1. Converts heme B (protoheme IX) to heme O by substitution of the vinyl group on carbon 2 of heme B porphyrin ring with a hydroxyethyl farnesyl side group. The chain is Protoheme IX farnesyltransferase from Thermofilum pendens (strain DSM 2475 / Hrk 5).